A 338-amino-acid polypeptide reads, in one-letter code: uncharacterized protein (338 aa).

The segment at 1 to 20 is disordered; the sequence is MYNNNQNHHNNDNNMNKDEP. The span at 9 to 20 shows a compositional bias: basic and acidic residues; that stretch reads HNNDNNMNKDEP. 6 N-linked (GlcNAc...) asparagine glycosylation sites follow: Asn37, Asn83, Asn97, Asn105, Asn114, and Asn122. Positions 55-92 are disordered; the sequence is VNSGNNNNNNNNNNNNNNNNNNNNNNNNNDSIVINMDT. Over residues 59–92 the composition is skewed to low complexity; the sequence is NNNNNNNNNNNNNNNNNNNNNNNNNDSIVINMDT. Helical transmembrane passes span 148–168, 178–198, and 202–222; these read YKKFISSLSYITFIGAAIVLI, FHAYQSFYISMGVIGFQFLLI, and ILSIILWSLYLLFTIFMFLKV. Residues Asn229, Asn240, Asn286, Asn302, Asn317, and Asn322 are each glycosylated (N-linked (GlcNAc...) asparagine). Disordered regions lie at residues 279-303 and 316-338; these read SNLNRNNNNSNNVNNNGHQRINSNS and LNSSGSNSSIYSDVQNDIGTNEE. A compositionally biased stretch (low complexity) spans 280-294; it reads NLNRNNNNSNNVNNN. The span at 316-327 shows a compositional bias: low complexity; sequence LNSSGSNSSIYS. Residues 328-338 show a composition bias toward polar residues; the sequence is DVQNDIGTNEE.

It localises to the membrane. This is an uncharacterized protein from Dictyostelium discoideum (Social amoeba).